A 324-amino-acid polypeptide reads, in one-letter code: Holliday junction branch migration complex subunit RuvB (324 aa).

Residues 1-168 (MEDLALRPKT…FGIVEHLEYY (168 aa)) are large ATPase domain (RuvB-L). ATP is bound by residues Tyr14, Ile15, Gly48, Lys51, Thr52, Thr53, Asp97, Thr146, Tyr168, and Arg205. Thr52 provides a ligand contact to Mg(2+). Residues 169–239 (TPEELAQGVM…RALEALAALG (71 aa)) form a small ATPAse domain (RuvB-S) region. The tract at residues 242–324 (ELGLEKRDRE…PPPVGPLLEP (83 aa)) is head domain (RuvB-H). Residues Arg297 and Arg302 each coordinate DNA.

Belongs to the RuvB family. As to quaternary structure, homohexamer. Forms a complex with RuvA. Electron microscopic images suggest 2 closely interacting RuvA tetramers sandwich the HJ DNA; each tetramer associates with an RuvB hexamer. Forms 2 complexes with Holliday junction (HJ) DNA which probably have 1 and 2 RuvA tetramers per complex (called complex I and complex II). Forms an RuvA(8)-RuvB(12)-Holliday junction (HJ) complex. HJ DNA is sandwiched between 2 RuvA tetramers; dsDNA enters through RuvA and exits via RuvB. An RuvB hexamer assembles on each DNA strand where it exits the tetramer. Each RuvB hexamer is contacted by two RuvA subunits (via domain III) on 2 adjacent RuvB subunits; this complex drives branch migration. In the full resolvosome a probable DNA-RuvA(4)-RuvB(12)-RuvC(2) complex forms which resolves the HJ. Requires Mg(2+) as cofactor.

The protein resides in the cytoplasm. It carries out the reaction ATP + H2O = ADP + phosphate + H(+). Its activity is regulated as follows. The activity of RuvB is enhanced by E.coli RuvA. Its function is as follows. The RuvA-RuvB-RuvC complex processes Holliday junction (HJ) DNA during genetic recombination and DNA repair, while the RuvA-RuvB complex plays an important role in the rescue of blocked DNA replication forks via replication fork reversal (RFR). RuvA specifically binds to HJ cruciform DNA, conferring on it an open structure. The RuvB hexamer acts as an ATP-dependent pump, pulling dsDNA into and through the RuvAB complex. RuvB forms 2 homohexamers on either side of HJ DNA bound by 1 or 2 RuvA tetramers; 4 subunits per hexamer contact DNA at a time. Coordinated motions by a converter formed by DNA-disengaged RuvB subunits stimulates ATP hydrolysis and nucleotide exchange. Immobilization of the converter enables RuvB to convert the ATP-contained energy into a lever motion, pulling 2 nucleotides of DNA out of the RuvA tetramer per ATP hydrolyzed, thus driving DNA branch migration. The RuvB motors rotate together with the DNA substrate, which together with the progressing nucleotide cycle form the mechanistic basis for DNA recombination by continuous HJ branch migration. Branch migration allows RuvC to scan DNA until it finds its consensus sequence, where it cleaves and resolves cruciform DNA. Functionally, ruvB is a Mg(2+)-dependent, DNA-dependent ATPase with an equal preference for supercoiled and linear dsDNA; all (d)NTPs tested were efficiently hydrolyzed. Promotes Holliday junction (HJ) dissociation at 60 degrees Celsius in the presence of ATP but not ATP-gamma-S or ADP; (d)ATP, (d)CTP and dTTP also power dissociation in the absence of any RuvA. RuvA stimulates the ATPase of RuvB in the presence of dsDNA and HJ branch migration by RuvB. Excess RuvB stimulates some branch migration in vitro even in the presence of mutant RuvA. This is Holliday junction branch migration complex subunit RuvB from Thermus thermophilus (strain ATCC 27634 / DSM 579 / HB8).